A 100-amino-acid polypeptide reads, in one-letter code: Urease subunit gamma (100 aa).

Belongs to the urease gamma subunit family. Heterotrimer of UreA (gamma), UreB (beta) and UreC (alpha) subunits. Three heterotrimers associate to form the active enzyme.

The protein resides in the cytoplasm. The catalysed reaction is urea + 2 H2O + H(+) = hydrogencarbonate + 2 NH4(+). Its pathway is nitrogen metabolism; urea degradation; CO(2) and NH(3) from urea (urease route): step 1/1. This chain is Urease subunit gamma, found in Yersinia aldovae.